Consider the following 541-residue polypeptide: Solute carrier family 22 member 10 (541 aa).

Residues 1-15 (MAFEELLSQVGGLGR) are Cytoplasmic-facing. A helical transmembrane segment spans residues 16–36 (FQMLHLVFILPSLMLLIPHIL). Residues 37–145 (LENFAAAIPG…DLVCDYQSLK (109 aa)) lie on the Extracellular side of the membrane. 2 N-linked (GlcNAc...) asparagine glycosylation sites follow: Asn-56 and Asn-102. The chain crosses the membrane as a helical span at residues 146–166 (SVVQFLLLTGMLVGGIIGGHV). The Cytoplasmic portion of the chain corresponds to 167–193 (SDRFGRRFILRWCLLQLAITDTCAAFA). The helical transmembrane segment at 194–214 (PTFPVYCVLRFLAGFSSMIII) threads the bilayer. The Extracellular segment spans residues 215-230 (SNNSLPITEWIRPNSK). Residues 231 to 251 (ALVVILSSGALSIGQIILGGL) form a helical membrane-spanning segment. Topologically, residues 252–259 (AYVFRDWQ) are cytoplasmic. Residues 260-280 (TLHVVASVPFFVFFLLSRWLV) traverse the membrane as a helical segment. Over 281–349 (ESARWLIITN…LFRNPSMRKR (69 aa)) the chain is Extracellular. The chain crosses the membrane as a helical span at residues 350 to 370 (ICILVFLRFANTIPFYGTMVN). The Cytoplasmic portion of the chain corresponds to 371 to 377 (LQHVGSN). A helical transmembrane segment spans residues 378 to 398 (IFLLQVLYGAVALIVRCLALL). Residues 399 to 406 (TLNHMGRR) lie on the Extracellular side of the membrane. A helical membrane pass occupies residues 407 to 427 (ISQILFMFLVGLSILANTFVP). The Cytoplasmic segment spans residues 428 to 436 (KEMQTLRVA). A helical membrane pass occupies residues 437–457 (LACLGIGCSAATFSSVAVHFI). The Extracellular segment spans residues 458–472 (ELIPTVLRARASGID). The helical transmembrane segment at 473-493 (LTASRIGAALAPLLMTLTVFF) threads the bilayer. At 494–495 (TT) the chain is on the cytoplasmic side. Residues 496 to 516 (LPWIIYGIFPIIGGLIVFLLP) traverse the membrane as a helical segment. At 517 to 541 (ETKNLPLPDTIKDVENQKKNLKEKA) the chain is on the extracellular side.

The protein belongs to the major facilitator (TC 2.A.1) superfamily. Organic cation transporter (TC 2.A.1.19) family. Detected in fetal and adult liver, and in adult kidney.

The protein localises to the membrane. This is Solute carrier family 22 member 10 (SLC22A10) from Homo sapiens (Human).